Reading from the N-terminus, the 227-residue chain is Cytochrome c oxidase subunit 2 (227 aa).

Residues 1–14 are Mitochondrial intermembrane-facing; the sequence is MAYPFQLGLQDASS. The helical transmembrane segment at 15-45 threads the bilayer; the sequence is PIMEELMNFHDHTLMIVFLISSLVLYLMALM. The Mitochondrial matrix segment spans residues 46 to 59; that stretch reads LSTKLIHTSTMDAQ. The chain crosses the membrane as a helical span at residues 60 to 87; the sequence is EVETIWTILPAIILIMIALPSLRILYMM. Residues 88–227 lie on the Mitochondrial intermembrane side of the membrane; the sequence is DEINNPILTV…LFENWSMSMT (140 aa). Cu cation contacts are provided by histidine 161, cysteine 196, glutamate 198, cysteine 200, histidine 204, and methionine 207. Glutamate 198 is a binding site for Mg(2+).

Belongs to the cytochrome c oxidase subunit 2 family. Component of the cytochrome c oxidase (complex IV, CIV), a multisubunit enzyme composed of 14 subunits. The complex is composed of a catalytic core of 3 subunits MT-CO1, MT-CO2 and MT-CO3, encoded in the mitochondrial DNA, and 11 supernumerary subunits COX4I, COX5A, COX5B, COX6A, COX6B, COX6C, COX7A, COX7B, COX7C, COX8 and NDUFA4, which are encoded in the nuclear genome. The complex exists as a monomer or a dimer and forms supercomplexes (SCs) in the inner mitochondrial membrane with NADH-ubiquinone oxidoreductase (complex I, CI) and ubiquinol-cytochrome c oxidoreductase (cytochrome b-c1 complex, complex III, CIII), resulting in different assemblies (supercomplex SCI(1)III(2)IV(1) and megacomplex MCI(2)III(2)IV(2)). Found in a complex with TMEM177, COA6, COX18, COX20, SCO1 and SCO2. Interacts with TMEM177 in a COX20-dependent manner. Interacts with COX20. Interacts with COX16. Requires Cu cation as cofactor.

Its subcellular location is the mitochondrion inner membrane. It carries out the reaction 4 Fe(II)-[cytochrome c] + O2 + 8 H(+)(in) = 4 Fe(III)-[cytochrome c] + 2 H2O + 4 H(+)(out). Functionally, component of the cytochrome c oxidase, the last enzyme in the mitochondrial electron transport chain which drives oxidative phosphorylation. The respiratory chain contains 3 multisubunit complexes succinate dehydrogenase (complex II, CII), ubiquinol-cytochrome c oxidoreductase (cytochrome b-c1 complex, complex III, CIII) and cytochrome c oxidase (complex IV, CIV), that cooperate to transfer electrons derived from NADH and succinate to molecular oxygen, creating an electrochemical gradient over the inner membrane that drives transmembrane transport and the ATP synthase. Cytochrome c oxidase is the component of the respiratory chain that catalyzes the reduction of oxygen to water. Electrons originating from reduced cytochrome c in the intermembrane space (IMS) are transferred via the dinuclear copper A center (CU(A)) of subunit 2 and heme A of subunit 1 to the active site in subunit 1, a binuclear center (BNC) formed by heme A3 and copper B (CU(B)). The BNC reduces molecular oxygen to 2 water molecules using 4 electrons from cytochrome c in the IMS and 4 protons from the mitochondrial matrix. In Gerbillus gerbillus (Lesser Egyptian gerbil), this protein is Cytochrome c oxidase subunit 2 (MT-CO2).